Consider the following 122-residue polypeptide: Large ribosomal subunit protein uL14 (122 aa).

It belongs to the universal ribosomal protein uL14 family. In terms of assembly, part of the 50S ribosomal subunit. Forms a cluster with proteins L3 and L19. In the 70S ribosome, L14 and L19 interact and together make contacts with the 16S rRNA in bridges B5 and B8.

Binds to 23S rRNA. Forms part of two intersubunit bridges in the 70S ribosome. In Thermosynechococcus vestitus (strain NIES-2133 / IAM M-273 / BP-1), this protein is Large ribosomal subunit protein uL14.